Reading from the N-terminus, the 343-residue chain is Ribosomal RNA small subunit methyltransferase C (343 aa).

This sequence belongs to the methyltransferase superfamily. RsmC family. Monomer.

It is found in the cytoplasm. It catalyses the reaction guanosine(1207) in 16S rRNA + S-adenosyl-L-methionine = N(2)-methylguanosine(1207) in 16S rRNA + S-adenosyl-L-homocysteine + H(+). In terms of biological role, specifically methylates the guanine in position 1207 of 16S rRNA in the 30S particle. This chain is Ribosomal RNA small subunit methyltransferase C, found in Escherichia coli (strain 55989 / EAEC).